Here is a 297-residue protein sequence, read N- to C-terminus: F-box only protein 2 (297 aa).

Residues 1-47 (MDGDGDPESVSHPEEASPEEQPEEAGAEASAEEEQLREAEEEEEAEA) are disordered. The segment covering 16-47 (ASPEEQPEEAGAEASAEEEQLREAEEEEEAEA) has biased composition (acidic residues). The F-box domain maps to 48–95 (VEYLAELPEPLLLRVLAELPATELVQACRLVCLRWKELVDGAPLWLLK). Residue Ser106 is modified to Phosphoserine. An FBA domain is found at 117 to 297 (FYFLSKRRRN…VTNSSVWVEP (181 aa)). Residues 214–216 (RTD) and 279–280 (YW) contribute to the a carbohydrate site.

As to quaternary structure, component of the SCF(FBXO2) complex consisting of CUL1, RBX1, SKP1 and FBXO2. Predominantly detected as heterodimer with SKP1; the heterodimer with SKP1 is not part of the SCF(FBXO2) complex. In terms of tissue distribution, detected in brain and cochlea, in epithelial support cells and hair cells of the organ of Corti (at protein level).

It is found in the cytoplasm. Its subcellular location is the microsome membrane. Its pathway is protein modification; protein ubiquitination. Functionally, substrate recognition component of a SCF (SKP1-CUL1-F-box protein) E3 ubiquitin-protein ligase complex that mediates the ubiquitination and subsequent proteasomal degradation of target proteins. Involved in the endoplasmic reticulum-associated degradation pathway (ERAD) for misfolded lumenal proteins by recognizing and binding sugar chains on unfolded glycoproteins that are retrotranslocated into the cytosol and promoting their ubiquitination and subsequent degradation. Prevents formation of cytosolic aggregates of unfolded glycoproteins that have been retrotranslocated into the cytosol. Able to recognize and bind denatured glycoproteins, preferentially those of the high-mannose type. This chain is F-box only protein 2 (Fbxo2), found in Mus musculus (Mouse).